The chain runs to 599 residues: Flap endonuclease GEN-like 1 (599 aa).

Residues 1–96 are N-domain; it reads MGVGGNFWDL…ISRFFRSSGI (96 aa). Residues 2–95 form an XPG-N domain region; it reads GVGGNFWDLL…RISRFFRSSG (94 aa). Mg(2+)-binding residues include aspartate 31, aspartate 75, glutamate 140, glutamate 142, aspartate 161, aspartate 163, and aspartate 213. The segment at 128–213 is XPG-I domain; the sequence is ELLGIPVLKA…IAISLLVGND (86 aa). An I-domain region spans residues 128–217; that stretch reads ELLGIPVLKA…LLVGNDYDSG (90 aa). The segment at 213-407 is 5'-3' exonuclease domain; that stretch reads DYDSGGVLGI…LLPMLSTIYL (195 aa). Disordered stretches follow at residues 522 to 545 and 559 to 599; these read RESK…MGVQ and AAGQ…LLFG. 2 stretches are compositionally biased toward polar residues: residues 563-572 and 580-590; these read SIETGGSSKA and ATSTSSSNLTK.

The protein belongs to the XPG/RAD2 endonuclease family. GEN subfamily. Mg(2+) is required as a cofactor.

The protein resides in the nucleus. In terms of biological role, endonuclease which cleaves flap structures at the junction between single-stranded DNA and double-stranded DNA with a specific cleavage site in the 5' overhang strand exactly one nucleotide 3' of the branch point. Structure- and sequence-specific nuclease that resolves holliday junctions (HJs) by symmetrically oriented incisions in two opposing strands near the junction point, thus leading to ligatable products; HJs are physical links between homologous DNA molecules that arise as central intermediary structures during homologous recombination and repair in meiotic and somatic cells. Structure-specific nuclease with 5'-flap endonuclease activity, preferentially cleaving static flaps 5' overhang strand exactly one nucleotide in the 3' direction of the branch point. Also able to cleave double-stranded flap strand 1 exactly at the branch point. The polypeptide is Flap endonuclease GEN-like 1 (Arabidopsis thaliana (Mouse-ear cress)).